We begin with the raw amino-acid sequence, 452 residues long: Trigger factor (452 aa).

The PPIase FKBP-type domain maps to 170–256 (DSIVKVDFVE…IKSIKKRDLP (87 aa)).

The protein belongs to the FKBP-type PPIase family. Tig subfamily.

The protein localises to the cytoplasm. It catalyses the reaction [protein]-peptidylproline (omega=180) = [protein]-peptidylproline (omega=0). Involved in protein export. Acts as a chaperone by maintaining the newly synthesized protein in an open conformation. Functions as a peptidyl-prolyl cis-trans isomerase. This Borreliella afzelii (strain PKo) (Borrelia afzelii) protein is Trigger factor.